A 201-amino-acid chain; its full sequence is Pyridoxal 5'-phosphate synthase subunit PdxT (201 aa).

L-glutamine is bound at residue 49 to 51 (GES). The active-site Nucleophile is the Cys81. L-glutamine-binding positions include Arg110 and 139–140 (IR). Residues His175 and Glu177 each act as charge relay system in the active site.

It belongs to the glutaminase PdxT/SNO family. In terms of assembly, in the presence of PdxS, forms a dodecamer of heterodimers. Only shows activity in the heterodimer.

The enzyme catalyses aldehydo-D-ribose 5-phosphate + D-glyceraldehyde 3-phosphate + L-glutamine = pyridoxal 5'-phosphate + L-glutamate + phosphate + 3 H2O + H(+). It carries out the reaction L-glutamine + H2O = L-glutamate + NH4(+). The protein operates within cofactor biosynthesis; pyridoxal 5'-phosphate biosynthesis. Its function is as follows. Catalyzes the hydrolysis of glutamine to glutamate and ammonia as part of the biosynthesis of pyridoxal 5'-phosphate. The resulting ammonia molecule is channeled to the active site of PdxS. The protein is Pyridoxal 5'-phosphate synthase subunit PdxT of Streptomyces avermitilis (strain ATCC 31267 / DSM 46492 / JCM 5070 / NBRC 14893 / NCIMB 12804 / NRRL 8165 / MA-4680).